A 374-amino-acid polypeptide reads, in one-letter code: DNA replication and repair protein RecF (374 aa).

30–37 serves as a coordination point for ATP; the sequence is GPNAQGKS.

The protein belongs to the RecF family.

It is found in the cytoplasm. Its function is as follows. The RecF protein is involved in DNA metabolism; it is required for DNA replication and normal SOS inducibility. RecF binds preferentially to single-stranded, linear DNA. It also seems to bind ATP. In Acaryochloris marina (strain MBIC 11017), this protein is DNA replication and repair protein RecF.